The following is a 211-amino-acid chain: tRNA (guanine-N(7)-)-methyltransferase (211 aa).

Residues E43, D68, N95, and N117 each coordinate S-adenosyl-L-methionine. Substrate is bound by residues K121, D153, and 190–193; that span reads TEYE.

The protein belongs to the class I-like SAM-binding methyltransferase superfamily. TrmB family.

It carries out the reaction guanosine(46) in tRNA + S-adenosyl-L-methionine = N(7)-methylguanosine(46) in tRNA + S-adenosyl-L-homocysteine. The protein operates within tRNA modification; N(7)-methylguanine-tRNA biosynthesis. Its function is as follows. Catalyzes the formation of N(7)-methylguanine at position 46 (m7G46) in tRNA. This is tRNA (guanine-N(7)-)-methyltransferase from Clostridium kluyveri (strain ATCC 8527 / DSM 555 / NBRC 12016 / NCIMB 10680 / K1).